The chain runs to 437 residues: Ribosomal protein uS12 methylthiotransferase RimO (437 aa).

Positions 4–114 constitute an MTTase N-terminal domain; the sequence is PRVSFVSLGC…VMSAVHEAVP (111 aa). [4Fe-4S] cluster contacts are provided by Cys-13, Cys-49, Cys-78, Cys-145, Cys-149, and Cys-152. The Radical SAM core domain maps to 131-369; it reads LTPRHYAYLK…MAKQQQISTN (239 aa). In terms of domain architecture, TRAM spans 372 to 437; the sequence is KKKVGKRLPV…DAYDLHGIAV (66 aa).

It belongs to the methylthiotransferase family. RimO subfamily. [4Fe-4S] cluster serves as cofactor.

The protein resides in the cytoplasm. It carries out the reaction L-aspartate(89)-[ribosomal protein uS12]-hydrogen + (sulfur carrier)-SH + AH2 + 2 S-adenosyl-L-methionine = 3-methylsulfanyl-L-aspartate(89)-[ribosomal protein uS12]-hydrogen + (sulfur carrier)-H + 5'-deoxyadenosine + L-methionine + A + S-adenosyl-L-homocysteine + 2 H(+). Its function is as follows. Catalyzes the methylthiolation of an aspartic acid residue of ribosomal protein uS12. This chain is Ribosomal protein uS12 methylthiotransferase RimO, found in Brucella anthropi (strain ATCC 49188 / DSM 6882 / CCUG 24695 / JCM 21032 / LMG 3331 / NBRC 15819 / NCTC 12168 / Alc 37) (Ochrobactrum anthropi).